The primary structure comprises 1945 residues: Rho GTPase-activating protein 21 (1945 aa).

The tract at residues 26–53 is disordered; that stretch reads CEVSKNKDGKDQGEPVSPSEDEPFSWPG. Positions 29–38 are enriched in basic and acidic residues; sequence SKNKDGKDQG. Residues Ser-42 and Ser-63 each carry the phosphoserine modification. The PDZ domain occupies 56–165; the sequence is TVMLKRTSQG…TLELSVMPKD (110 aa). Disordered stretches follow at residues 210–229 and 326–365; these read TAQP…QQTS and HQTT…DSPP. The span at 347–358 shows a compositional bias: low complexity; that stretch reads SGHSEGISSSRS. Ser-454 is subject to Phosphoserine. Over residues 499–512 the composition is skewed to polar residues; that stretch reads EATATVNSESQIPD. Positions 499–519 are disordered; that stretch reads EATATVNSESQIPDSNGERKQ. Omega-N-methylarginine is present on residues Arg-549 and Arg-569. Disordered regions lie at residues 573-647 and 674-702; these read PVSQ…RPVN and EVSS…LELP. Residues 589–600 show a composition bias toward polar residues; sequence SNRNFPTTTGVS. 2 positions are modified to phosphoserine: Ser-610 and Ser-619. The segment covering 674–696 has biased composition (polar residues); it reads EVSSCLPGTSAKTSPQLSENLGT. Position 741 is a phosphothreonine (Thr-741). 3 positions are modified to phosphoserine: Ser-851, Ser-856, and Ser-875. Disordered stretches follow at residues 852–879 and 902–921; these read HDQE…YDEG and ITDS…SSSE. Residues 866–879 are compositionally biased toward basic and acidic residues; sequence HSSKTERSKSYDEG. Residue Tyr-876 is modified to Phosphotyrosine. Ser-918, Ser-920, Ser-948, Ser-1093, and Ser-1109 each carry phosphoserine. The interaction with ARF1 and ARF6 stretch occupies residues 924–1091; the sequence is SDAAREGWLQ…AKSEPKTQSP (168 aa). The region spanning 925 to 1034 is the PH domain; the sequence is DAAREGWLQF…WIKTIQESSN (110 aa). Positions 1080-1120 are disordered; the sequence is LGAKSEPKTQSPHSPKEESERKLLSKDDTSPPKDKGTWRRG. A compositionally biased stretch (basic and acidic residues) spans 1093–1116; it reads SPKEESERKLLSKDDTSPPKDKGT. Positions 1141–1333 constitute a Rho-GAP domain; that stretch reads VRLDDCPPAH…TLIQHHDWFF (193 aa). 4 disordered regions span residues 1373–1396, 1412–1632, 1649–1794, and 1846–1945; these read PGDV…SGKD, SRKR…PVFP, ARVS…LGGH, and RTSA…ETPP. The segment covering 1377 to 1395 has biased composition (low complexity); sequence SDSATSDSAKSKGSWGSGK. A phosphoserine mark is found at Ser-1412, Ser-1426, and Ser-1427. Basic and acidic residues-rich tracts occupy residues 1435–1457 and 1471–1488; these read FFKK…RESE and SNTK…KIPW. Lys-1438 participates in a covalent cross-link: Glycyl lysine isopeptide (Lys-Gly) (interchain with G-Cter in SUMO). Thr-1504 bears the Phosphothreonine mark. Composition is skewed to low complexity over residues 1531–1556 and 1569–1589; these read SDSG…STSP and TTTS…LDSS. The tract at residues 1579 to 1848 is interaction with CTNNA1; that stretch reads STTYLTSLDS…WLARERVRTS (270 aa). Residues 1590 to 1599 are compositionally biased toward polar residues; the sequence is RLSPEVQSVA. Positions 1611 to 1621 are enriched in basic and acidic residues; it reads SELVSEGRPVE. Phosphoserine is present on Ser-1656. 2 stretches are compositionally biased toward polar residues: residues 1658-1681 and 1729-1738; these read GSEA…QFSS and STGSLLTPSR. Thr-1669 bears the Phosphothreonine mark. At Ser-1729 the chain carries Phosphoserine. Over residues 1739-1757 the composition is skewed to basic and acidic residues; sequence SESEKQEATWKTKIADRLK. Residues 1782-1792 are compositionally biased toward basic residues; it reads RKNIKRRHTLG. The segment covering 1871–1882 has biased composition (polar residues); that stretch reads PISTHSPPSQQP. Over residues 1887–1896 the composition is skewed to low complexity; it reads AATSTLASTS. At Thr-1902 the chain carries Phosphothreonine. At Ser-1906 the chain carries Phosphoserine. Positions 1907 to 1927 are enriched in polar residues; sequence PDQINRESFQNMSQNASSTAN. The segment covering 1932-1945 has biased composition (basic and acidic residues); that stretch reads KQSESPDTKAETPP.

Interacts with CTNNA1. Interacts with GTP-bound ARF1 and probably ARF6. In terms of processing, sumoylated with SUMO2 and SUMO3 in proliferating lymphocytes.

It is found in the golgi apparatus membrane. Its subcellular location is the cell junction. The protein resides in the cytoplasmic vesicle membrane. The protein localises to the cytoplasm. It localises to the cytoskeleton. Its function is as follows. Functions as a GTPase-activating protein (GAP) for RHOA and CDC42. Downstream partner of ARF1 which may control Golgi apparatus structure and function. Also required for CTNNA1 recruitment to adherens junctions. In Mus musculus (Mouse), this protein is Rho GTPase-activating protein 21.